Consider the following 64-residue polypeptide: Large ribosomal subunit protein bL35 (64 aa).

The segment at methionine 1–glycine 56 is disordered. The span at lysine 23–lysine 35 shows a compositional bias: basic residues.

Belongs to the bacterial ribosomal protein bL35 family.

The chain is Large ribosomal subunit protein bL35 from Chlamydia abortus (strain DSM 27085 / S26/3) (Chlamydophila abortus).